The chain runs to 493 residues: Ectonucleotide pyrophosphatase/phosphodiesterase 2 (493 aa).

Over 1–28 (MLLFEQPVDLEKNNEDDTNIKPFAISRH) the chain is Cytoplasmic. Residues 29-45 (FLLKLLLCGIILIELLL) form a helical; Signal-anchor for type II membrane protein membrane-spanning segment. At 46-493 (YSKCPKPIDN…KTKKEKSLLQ (448 aa)) the chain is on the extracellular side. N-linked (GlcNAc...) asparagine glycosylation is found at N62, N69, and N112. The interval 76-438 (TLTILISIDG…IGIMGTHGYN (363 aa)) is phosphodiesterase. Residue T127 is the Nucleophile of the active site. N-linked (GlcNAc...) asparagine glycans are attached at residues N153 and N441.

Belongs to the nucleotide pyrophosphatase/phosphodiesterase family. Autophosphorylated as part of the catalytic cycle of phosphodiesterase/pyrophosphatase activity.

It is found in the membrane. It carries out the reaction Hydrolytically removes 5'-nucleotides successively from the 3'-hydroxy termini of 3'-hydroxy-terminated oligonucleotides.. The catalysed reaction is a ribonucleoside 5'-triphosphate + H2O = a ribonucleoside 5'-phosphate + diphosphate + H(+). The enzyme catalyses a 2'-deoxyribonucleoside 5'-triphosphate + H2O = a 2'-deoxyribonucleoside 5'-phosphate + diphosphate + H(+). Its function is as follows. Mediates extracellular nucleotide derived phosphate hydrolysis along with NPP1 and PHO5. The protein is Ectonucleotide pyrophosphatase/phosphodiesterase 2 (NPP2) of Saccharomyces cerevisiae (strain ATCC 204508 / S288c) (Baker's yeast).